The following is an 83-amino-acid chain: Exodeoxyribonuclease 7 small subunit (83 aa).

Belongs to the XseB family. As to quaternary structure, heterooligomer composed of large and small subunits.

The protein localises to the cytoplasm. The catalysed reaction is Exonucleolytic cleavage in either 5'- to 3'- or 3'- to 5'-direction to yield nucleoside 5'-phosphates.. Its function is as follows. Bidirectionally degrades single-stranded DNA into large acid-insoluble oligonucleotides, which are then degraded further into small acid-soluble oligonucleotides. The polypeptide is Exodeoxyribonuclease 7 small subunit (Aeromonas salmonicida (strain A449)).